A 207-amino-acid polypeptide reads, in one-letter code: Peptidyl-prolyl cis-trans isomerase FKBP16-1, chloroplastic (207 aa).

The PPIase FKBP-type domain occupies 104-207 (GDLVELNYVC…VFEIQLLKVL (104 aa)).

It belongs to the FKBP-type PPIase family.

The protein localises to the plastid. It is found in the chloroplast thylakoid lumen. The enzyme catalyses [protein]-peptidylproline (omega=180) = [protein]-peptidylproline (omega=0). PPIases accelerate the folding of proteins. It catalyzes the cis-trans isomerization of proline imidic peptide bonds in oligopeptides. The protein is Peptidyl-prolyl cis-trans isomerase FKBP16-1, chloroplastic (FKBP16-1) of Arabidopsis thaliana (Mouse-ear cress).